Reading from the N-terminus, the 197-residue chain is Pinin homolog 1 (197 aa).

Positions Leu-30–Gly-73 are disordered. Composition is skewed to basic and acidic residues over residues Val-34–Ile-43 and Asp-53–Lys-71.

The protein belongs to the pinin family.

It localises to the nucleus. The protein localises to the cytoplasm. In terms of biological role, transcriptional activator that may participate in the regulation of mRNA splicing. The sequence is that of Pinin homolog 1 (pnn1) from Schizosaccharomyces pombe (strain 972 / ATCC 24843) (Fission yeast).